Here is a 108-residue protein sequence, read N- to C-terminus: Small ribosomal subunit protein bS18c (108 aa).

Basic residues-rich tracts occupy residues 1–19 and 97–108; these read MDKSKRTFRKSKRSFRRRL and RARKKKIGLLLN. Disordered regions lie at residues 1–23 and 83–108; these read MDKSKRTFRKSKRSFRRRLPPIG and QFERTESTPRTTGTRARKKKIGLLLN.

The protein belongs to the bacterial ribosomal protein bS18 family. Part of the 30S ribosomal subunit.

It localises to the plastid. The protein localises to the chloroplast. The chain is Small ribosomal subunit protein bS18c from Illicium oligandrum (Star anise).